The primary structure comprises 135 residues: UPF0102 protein Mkms_2031 (135 aa).

It belongs to the UPF0102 family.

The protein is UPF0102 protein Mkms_2031 of Mycobacterium sp. (strain KMS).